The following is a 4171-amino-acid chain: Cytoplasmic dynein 2 heavy chain 1 (4171 aa).

The segment at 1 to 1598 is stem; that stretch reads MSSDSKDQRK…VLRQVSSEFE (1598 aa). 115-122 provides a ligand contact to ATP; the sequence is GKELTEGN. Coiled coils occupy residues 164–203, 629–693, 829–861, 927–1048, and 1354–1383; these read ANDY…CDEL, KQLE…KEEE, DLEE…AERL, EIAE…KEKR, and SRQS…LEQK. AAA stretches follow at residues 1599–1823, 1883–2100, 2184–2432, and 2527–2767; these read YTYE…VLGG, EPLG…VRSH, VTKE…WVVS, and RFAF…PIKY. ATP is bound by residues 1637 to 1644, 1921 to 1928, 2226 to 2233, and 2565 to 2572; these read GPAGTGKT, GAAGSGKS, GTTGCGKQ, and GRPGFGRR. The segment at 2776–3064 is stalk; it reads QLLGYKRLTL…VDLDREQDTI (289 aa). 3 coiled-coil regions span residues 2790-2877, 2999-3059, and 3308-3336; these read ERLK…KEVQ, EKIA…DLDR, and ELEE…LLLQ. AAA stretches follow at residues 3140-3367 and 3575-3784; these read ASLE…IITK and LMDF…FVEQ.

The protein belongs to the dynein heavy chain family. As to quaternary structure, the cytoplasmic dynein complex 2 is probably composed by a heavy chain che-3 homodimer and a number of light intermediate chains.

The protein localises to the cell projection. It localises to the cilium membrane. Its subcellular location is the cytoplasm. The protein resides in the cytoskeleton. Functions as a motor for intraflagellar retrograde transport in chemosensory neurons. Functions in cilia biogenesis. The polypeptide is Cytoplasmic dynein 2 heavy chain 1 (Caenorhabditis elegans).